Here is a 373-residue protein sequence, read N- to C-terminus: Putative glutamate--cysteine ligase 2 (373 aa).

This sequence belongs to the glutamate--cysteine ligase type 2 family. YbdK subfamily. In terms of assembly, homodimer.

It carries out the reaction L-cysteine + L-glutamate + ATP = gamma-L-glutamyl-L-cysteine + ADP + phosphate + H(+). Functionally, ATP-dependent carboxylate-amine ligase which exhibits weak glutamate--cysteine ligase activity. The protein is Putative glutamate--cysteine ligase 2 of Enterobacter sp. (strain 638).